Here is a 415-residue protein sequence, read N- to C-terminus: Imidazolonepropionase (415 aa).

2 residues coordinate Fe(3+): His-74 and His-76. His-74 and His-76 together coordinate Zn(2+). Positions 83, 146, and 179 each coordinate 4-imidazolone-5-propanoate. Tyr-146 contributes to the N-formimidoyl-L-glutamate binding site. His-244 serves as a coordination point for Fe(3+). A Zn(2+)-binding site is contributed by His-244. 4-imidazolone-5-propanoate is bound at residue Gln-247. Residue Asp-319 participates in Fe(3+) binding. Asp-319 contacts Zn(2+). Asn-321 and Gly-323 together coordinate N-formimidoyl-L-glutamate. Thr-324 is a 4-imidazolone-5-propanoate binding site.

The protein belongs to the metallo-dependent hydrolases superfamily. HutI family. Requires Zn(2+) as cofactor. Fe(3+) serves as cofactor.

The protein resides in the cytoplasm. The catalysed reaction is 4-imidazolone-5-propanoate + H2O = N-formimidoyl-L-glutamate. It functions in the pathway amino-acid degradation; L-histidine degradation into L-glutamate; N-formimidoyl-L-glutamate from L-histidine: step 3/3. Its function is as follows. Catalyzes the hydrolytic cleavage of the carbon-nitrogen bond in imidazolone-5-propanoate to yield N-formimidoyl-L-glutamate. It is the third step in the universal histidine degradation pathway. The protein is Imidazolonepropionase of Cupriavidus metallidurans (strain ATCC 43123 / DSM 2839 / NBRC 102507 / CH34) (Ralstonia metallidurans).